The primary structure comprises 292 residues: MVLTRQVLEEVENTFIELLRSKIGPLVKSHAGTNFCSYDDKANGVDLVTALDKQIESIIKENLTAKYPSFKFIGEETYVKGVTKITNGPTFIVDPIDGTTNFIHGYPYSCTSLGLAEMGKPVVGVVFNPHLNQLFHASKGNGAFLNDQEIKVSKRPLILQKSLIALEGGSERTEGSQGNFDKKMNTYKNLLSESGAFVHGFRSAGSAAMNICYVASGMLDAYWEGGCWAWDVCAGWCILEEAGGIMVGGNCGEWNIPLDRRCYLAIRGGCESMEQKRFAESFWPHVAGELEY.

Glutamate 75, aspartate 94, isoleucine 96, aspartate 97, and aspartate 231 together coordinate Mg(2+). Glutamate 75 is a binding site for substrate. Substrate contacts are provided by residues 96-99 (IDGT) and aspartate 231.

It belongs to the inositol monophosphatase superfamily. It depends on Mg(2+) as a cofactor.

The enzyme catalyses a myo-inositol phosphate + H2O = myo-inositol + phosphate. It participates in polyol metabolism; myo-inositol biosynthesis; myo-inositol from D-glucose 6-phosphate: step 2/2. Inhibited by Li(+) and Na(+). Functionally, responsible for the provision of inositol required for synthesis of phosphatidylinositol and polyphosphoinositides and involved in the inositol cycle of calcium signaling. The polypeptide is Inositol monophosphatase 2 (INM2) (Saccharomyces cerevisiae (strain ATCC 204508 / S288c) (Baker's yeast)).